Reading from the N-terminus, the 428-residue chain is 3-phosphoshikimate 1-carboxyvinyltransferase (428 aa).

Positions 22, 23, and 27 each coordinate 3-phosphoshikimate. Lys-22 contacts phosphoenolpyruvate. Phosphoenolpyruvate-binding residues include Gly-96 and Arg-124. 3-phosphoshikimate-binding residues include Ser-170, Ser-171, Gln-172, Ser-198, Asp-314, Asn-337, and Lys-341. Gln-172 lines the phosphoenolpyruvate pocket. The active-site Proton acceptor is Asp-314. Positions 345, 387, and 412 each coordinate phosphoenolpyruvate.

Belongs to the EPSP synthase family. Monomer.

The protein resides in the cytoplasm. The enzyme catalyses 3-phosphoshikimate + phosphoenolpyruvate = 5-O-(1-carboxyvinyl)-3-phosphoshikimate + phosphate. It functions in the pathway metabolic intermediate biosynthesis; chorismate biosynthesis; chorismate from D-erythrose 4-phosphate and phosphoenolpyruvate: step 6/7. Functionally, catalyzes the transfer of the enolpyruvyl moiety of phosphoenolpyruvate (PEP) to the 5-hydroxyl of shikimate-3-phosphate (S3P) to produce enolpyruvyl shikimate-3-phosphate and inorganic phosphate. In Vibrio vulnificus (strain YJ016), this protein is 3-phosphoshikimate 1-carboxyvinyltransferase.